A 307-amino-acid polypeptide reads, in one-letter code: Ribosomal protein L11 methyltransferase (307 aa).

Residues Thr144, Gly165, Asp187, and Asn235 each coordinate S-adenosyl-L-methionine.

This sequence belongs to the methyltransferase superfamily. PrmA family.

The protein localises to the cytoplasm. It carries out the reaction L-lysyl-[protein] + 3 S-adenosyl-L-methionine = N(6),N(6),N(6)-trimethyl-L-lysyl-[protein] + 3 S-adenosyl-L-homocysteine + 3 H(+). In terms of biological role, methylates ribosomal protein L11. The protein is Ribosomal protein L11 methyltransferase of Psychrobacter sp. (strain PRwf-1).